The primary structure comprises 401 residues: 1-deoxy-D-xylulose 5-phosphate reductoisomerase (401 aa).

The NADPH site is built by threonine 11, glycine 12, serine 13, isoleucine 14, arginine 38, asparagine 39, and asparagine 125. Lysine 126 serves as a coordination point for 1-deoxy-D-xylulose 5-phosphate. Glutamate 127 is an NADPH binding site. Aspartate 151 provides a ligand contact to Mn(2+). Residues serine 152, glutamate 153, serine 179, and histidine 202 each coordinate 1-deoxy-D-xylulose 5-phosphate. Residue glutamate 153 coordinates Mn(2+). Glycine 208 is a binding site for NADPH. Positions 215, 220, 221, and 224 each coordinate 1-deoxy-D-xylulose 5-phosphate. Position 224 (glutamate 224) interacts with Mn(2+).

It belongs to the DXR family. Requires Mg(2+) as cofactor. It depends on Mn(2+) as a cofactor.

The catalysed reaction is 2-C-methyl-D-erythritol 4-phosphate + NADP(+) = 1-deoxy-D-xylulose 5-phosphate + NADPH + H(+). It functions in the pathway isoprenoid biosynthesis; isopentenyl diphosphate biosynthesis via DXP pathway; isopentenyl diphosphate from 1-deoxy-D-xylulose 5-phosphate: step 1/6. Catalyzes the NADPH-dependent rearrangement and reduction of 1-deoxy-D-xylulose-5-phosphate (DXP) to 2-C-methyl-D-erythritol 4-phosphate (MEP). The chain is 1-deoxy-D-xylulose 5-phosphate reductoisomerase from Paraburkholderia phymatum (strain DSM 17167 / CIP 108236 / LMG 21445 / STM815) (Burkholderia phymatum).